We begin with the raw amino-acid sequence, 1269 residues long: Protein cramped-like (1269 aa).

Gly residues predominate over residues 1-12 (MTVKLGDGGSGE). Residues 1 to 165 (MTVKLGDGGS…GKKVRRQWES (165 aa)) are disordered. Composition is skewed to basic and acidic residues over residues 13–24 (DGLKKLGKRAAD) and 43–52 (SGTKRDEKTP). Residues 59–74 (PPAPPGAPQAPSPPQG) show a composition bias toward pro residues. The segment covering 105 to 123 (GNAGGSGPRGKGAEGGGSS) has biased composition (gly residues). Over residues 124 to 147 (SGNVSGVAPAAPAGGSRSSSRNLG) the composition is skewed to low complexity. Positions 151 to 165 (GEKEEGKKVRRQWES) are enriched in basic and acidic residues. The SANT domain maps to 161-224 (RQWESWSTED…FYYRTWHKIT (64 aa)). Position 307 is a phosphoserine (serine 307). Disordered regions lie at residues 450-541 (IQSG…PGAL), 581-666 (DTRP…EVPA), 757-827 (VRPA…NDSD), 976-1034 (EGLS…DSFQ), 1055-1092 (IPLS…SQGE), and 1115-1157 (VPLS…PSDS). The span at 485-507 (SSGESSPESAPGEGAALSLSSPD) shows a compositional bias: low complexity. Composition is skewed to basic and acidic residues over residues 508 to 518 (APDRPPPRHQD) and 526 to 535 (TPAEGRDSPT). 3 stretches are compositionally biased toward polar residues: residues 757-767 (VRPAQEEQSMT), 774-806 (TVSS…SSGL), and 982-1002 (SPLS…TGTH). Low complexity-rich tracts occupy residues 1055 to 1070 (IPLS…LSPP) and 1125 to 1140 (SDSS…SPQP). The residue at position 1268 (serine 1268) is a Phosphoserine.

This sequence belongs to the cramped family.

The protein localises to the nucleus. The protein is Protein cramped-like of Homo sapiens (Human).